We begin with the raw amino-acid sequence, 274 residues long: Enoyl-CoA isomerase/hydratase fer4 (274 aa).

Substrate contacts are provided by residues 77-81 (AGADL) and glycine 124. Positions 79–109 (ADLKERREMSEAEVIEFLQDLRHMLEQVEKL) form a coiled coil.

It belongs to the enoyl-CoA hydratase/isomerase family.

It catalyses the reaction a (3S)-3-hydroxyacyl-CoA = a (2E)-enoyl-CoA + H2O. The catalysed reaction is a 4-saturated-(3S)-3-hydroxyacyl-CoA = a (3E)-enoyl-CoA + H2O. It participates in siderophore biosynthesis. Its function is as follows. Enoyl-CoA isomerase/hydratase; part of the gene cluster that mediates the biosynthesis of siderophore ferrichrome A which is contributing to organismal virulence. The first step of ferrichrome A biosynthesis is performed by the HMG-CoA synthase hcs1 which catalyzes the generation of HMG-CoA and CoA using acetoacetyl-CoA and acetyl-CoA as substrates. The enoyl-CoA isomerase/hydratase fer4 then catalyzes the conversion of hcs1-produced HMG-CoA to methylglutaconyl-CoA. The acyltransferase fer5 then fuses the fer4-generated methylglutaconyl-CoA with sid1-generated hydroxyornithine to yield methylglutaconyl hydroxyornithine. Methylglutaconyl hydroxyornithine is then available for use by the NRPS fer3 to generate ferrichrome A. The chain is Enoyl-CoA isomerase/hydratase fer4 from Mycosarcoma maydis (Corn smut fungus).